A 150-amino-acid polypeptide reads, in one-letter code: Transthyretin (150 aa).

The N-terminal stretch at 1–20 is a signal peptide; it reads MAFHSTLLVFLAGLVFLSEA. C33 bears the Sulfocysteine mark. The L-thyroxine site is built by K38, E77, and S140.

Belongs to the transthyretin family. Homotetramer. Dimer of dimers. In the homotetramer, subunits assemble around a central channel that can accommodate two ligand molecules. In terms of processing, sulfonation of the reactive cysteine Cys-33 enhances the stability of the native conformation of TTR, avoiding misassembly of the protein leading to amyloid formation. Detected in serum (at protein level). Detected in liver and choroid plexus.

Its subcellular location is the secreted. Thyroid hormone-binding protein. Probably transports thyroxine from the bloodstream to the brain. The protein is Transthyretin (TTR) of Gallus gallus (Chicken).